The sequence spans 954 residues: Kinesin-like protein KIN-14A (954 aa).

The 119-residue stretch at 24–142 (ALRRHQAATW…CVISLKSYHE (119 aa)) folds into the Calponin-homology (CH) domain. The stretch at 242–293 (LSRQLEKEQSSNSQVENRRRLLQAQESELLELKSMFQEVKIDFRTLKTQFQD) forms a coiled coil. The Kinesin motor domain occupies 332-651 (NIRVFCRIRP…LKFAQRASCV (320 aa)). 413–420 (GQTGSGKT) contributes to the ATP binding site. Positions 656–692 (AHANKESNEIRELKEQVENLKRALAAKELEKSSFKLK) form a coiled coil. Over residues 697–709 (VRERAKQVPERTP) the composition is skewed to basic and acidic residues. Disordered stretches follow at residues 697-743 (VRER…TKLN), 824-858 (NLEV…RKSI), and 882-954 (PAKI…KRWL). Composition is skewed to polar residues over residues 831–849 (DEPS…NATK) and 886–898 (ANST…SSIT).

The protein belongs to the TRAFAC class myosin-kinesin ATPase superfamily. Kinesin family. KIN-14 subfamily.

This chain is Kinesin-like protein KIN-14A, found in Oryza sativa subsp. japonica (Rice).